A 658-amino-acid chain; its full sequence is Non-reducing end beta-L-arabinofuranosidase (658 aa).

Residues H142, 192-194, H270, and E322 contribute to the beta-L-arabinofuranose site; that span reads DGH. The active-site Proton donor/acceptor is the E322. Zn(2+) is bound by residues E338, C340, C417, and C418. The active-site Nucleophile; S-glycosyl-cysteine intermediate is C417.

The protein belongs to the glycosyl hydrolase 127 family. As to quaternary structure, homodimer in solution. The cofactor is Zn(2+).

The catalysed reaction is beta-L-arabinofuranosyl-(1-&gt;2)-beta-L-arabinofuranose + H2O = 2 beta-L-arabinofuranose. Strongly inhibited in the presence of thiol modifiers, suggesting a crucial role for cysteine residues in catalysis. Slightly inhibited by EDTA. In terms of biological role, beta-L-arabinofuranosidase that removes the beta-L-arabinofuranose residue from the non-reducing end of various substrates, including beta-L-arabinofuranosyl-hydroxyproline (Ara-Hyp), Ara-beta-1,2-Ara-beta-Hyp (Ara(2)-Hyp), Ara-beta-1,2-Ara-beta-1,2-Ara-beta-Hyp (Ara(3)-Hyp), and beta-L-arabinofuranosyl-(1-&gt;2)-1-O-methyl-beta-L-arabinofuranose. In the presence of 1-alkanols, shows transglycosylation activity, retaining the anomeric configuration of the arabinofuranose residue. The polypeptide is Non-reducing end beta-L-arabinofuranosidase (Bifidobacterium longum subsp. longum (strain ATCC 15707 / DSM 20219 / JCM 1217 / NCTC 11818 / E194b)).